Here is a 419-residue protein sequence, read N- to C-terminus: Carboxypeptidase A1 (419 aa).

The first 16 residues, 1-16 (MQGLLILSVLLGAALG), serve as a signal peptide directing secretion. A propeptide spans 17 to 110 (KEDFVGHQVL…QEQMFASQSR (94 aa)) (activation peptide). One can recognise a Peptidase M14 domain in the interval 121–414 (TYHTLDEIYD…LGVLTIMEHT (294 aa)). Positions 179 and 182 each coordinate Zn(2+). Residues 179–182 (HSRE), R237, and 254–255 (NR) contribute to the substrate site. The cysteines at positions 248 and 271 are disulfide-linked. Position 306 (H306) interacts with Zn(2+). Substrate contacts are provided by residues 307–308 (SY) and Y358. E380 acts as the Proton donor/acceptor in catalysis.

This sequence belongs to the peptidase M14 family. As to quaternary structure, monomer. May form a complex with proelastase 2. It depends on Zn(2+) as a cofactor. As to expression, pancreas.

Its subcellular location is the secreted. It carries out the reaction Release of a C-terminal amino acid, but little or no action with -Asp, -Glu, -Arg, -Lys or -Pro.. The catalysed reaction is leukotriene C4 + H2O = leukotriene F4 + glycine. Its activity is regulated as follows. Inhibited by interaction with the S.magnifica carboxypeptidase inhibitor SmCI. Its function is as follows. Carboxypeptidase that catalyzes the release of a C-terminal amino acid, but has little or no action with -Asp, -Glu, -Arg, -Lys or -Pro. Catalyzes the conversion of leukotriene C4 to leukotriene F4 via the hydrolysis of an amide bond. This is Carboxypeptidase A1 (CPA1) from Bos taurus (Bovine).